The chain runs to 431 residues: Intraflagellar transport protein 38 (431 aa).

The stretch at 177 to 218 (SAAVQQRIKNLAAECNTLQEEVTTNKREKAKLEEQITQKKQS) forms a coiled coil. Residues 346 to 431 (INTNAEIPDD…EELDPDNIEF (86 aa)) form a disordered region. Over residues 352–370 (IPDDESYSYSYEEEEEEEQ) the composition is skewed to acidic residues. Residues 384 to 405 (PETHSNGEKHRGLDELSHKSNE) show a composition bias toward basic and acidic residues. Over residues 420 to 431 (GGEELDPDNIEF) the composition is skewed to acidic residues.

It belongs to the CLUAP1 family.

It localises to the cell projection. Its subcellular location is the cilium. The protein localises to the flagellum. It is found in the cytoplasm. The protein resides in the cytoskeleton. It localises to the flagellum axoneme. Its subcellular location is the flagellum basal body. Component of the intraflagellar transport complex B (IFT-B) involved in flagellar assembly. The polypeptide is Intraflagellar transport protein 38 (Giardia intestinalis (strain ATCC 50803 / WB clone C6) (Giardia lamblia)).